The sequence spans 123 residues: Transmembrane protein 254 (123 aa).

Alanine 2 carries the N-acetylalanine modification. Helical transmembrane passes span 15–35, 61–81, and 95–115; these read LFWF…VFWP, LCNG…YAIV, and LLWF…LIAY.

It is found in the membrane. The protein is Transmembrane protein 254 (TMEM254) of Homo sapiens (Human).